The sequence spans 370 residues: ADP-ribosylhydrolase ARH3 (370 aa).

Mg(2+) is bound by residues Glu-35, Asp-66, and Asp-67. Asp-66 is a binding site for substrate. Residues 135 to 141 (RGSFGNG), His-171, Leu-225, and Ile-261 contribute to the substrate site. Mg(2+) contacts are provided by Asp-304, Asp-306, and Thr-307.

The protein belongs to the ADP-ribosylglycohydrolase family. Monomer. The cofactor is Mg(2+).

The protein localises to the nucleus. It is found in the cytoplasm. Its subcellular location is the chromosome. The protein resides in the mitochondrion matrix. The catalysed reaction is [(1''-&gt;2')-ADP-alpha-D-ribose](n) + H2O = [(1''-&gt;2')-ADP-alpha-D-ribose](n-1) + ADP-D-ribose. The enzyme catalyses 1''-O-acetyl-ADP-alpha-D-ribose + H2O = ADP-D-ribose + acetate + H(+). It catalyses the reaction O-(ADP-D-ribosyl)-L-seryl-[protein] + H2O = ADP-D-ribose + L-seryl-[protein]. It carries out the reaction alpha-NAD(+) + H2O = ADP-D-ribose + nicotinamide + H(+). The protein undergoes a dramatic conformational switch from closed to open states upon substrate-binding, which enables specific substrate recognition for the 1''-O-linkage. The glutamate flap (Glu-35) blocks substrate entrance to Mg(2+) in the unliganded closed state. In presence of substrate, Glu-35 is ejected from the active site: this closed-to-open transition significantly widens the substrate-binding channel and precisely positions the scissile 1''-O-linkage for cleavage while securing tightly 2'- and 3'-hydroxyls of ADP-ribose. ADP-ribosylhydrolase that preferentially hydrolyzes the scissile alpha-O-linkage attached to the anomeric C1'' position of ADP-ribose and acts on different substrates, such as proteins ADP-ribosylated on serine and threonine, free poly(ADP-ribose) and O-acetyl-ADP-D-ribose. Specifically acts as a serine mono-ADP-ribosylhydrolase by mediating the removal of mono-ADP-ribose attached to serine residues on proteins, thereby playing a key role in DNA damage response. Serine ADP-ribosylation of proteins constitutes the primary form of ADP-ribosylation of proteins in response to DNA damage. Does not hydrolyze ADP-ribosyl-arginine, -cysteine, -diphthamide, or -asparagine bonds. Also able to degrade protein free poly(ADP-ribose), which is synthesized in response to DNA damage: free poly(ADP-ribose) acts as a potent cell death signal and its degradation by ADPRHL2 protects cells from poly(ADP-ribose)-dependent cell death, a process named parthanatos. Also hydrolyzes free poly(ADP-ribose) in mitochondria. Specifically digests O-acetyl-ADP-D-ribose, a product of deacetylation reactions catalyzed by sirtuins. Specifically degrades 1''-O-acetyl-ADP-D-ribose isomer, rather than 2''-O-acetyl-ADP-D-ribose or 3''-O-acetyl-ADP-D-ribose isomers. This chain is ADP-ribosylhydrolase ARH3 (adprs), found in Danio rerio (Zebrafish).